The sequence spans 177 residues: Plasmid transfer protein TraF (177 aa).

The signal sequence occupies residues 1–30; sequence MSRFQRLTKYVAIGGGAALLLAGAAYLAGA.

This sequence belongs to the peptidase S26C family.

The protein localises to the periplasm. In terms of biological role, required for donor-specific phage sensitivity. May be involved in pilus assembly. This Escherichia coli protein is Plasmid transfer protein TraF (traF).